The primary structure comprises 291 residues: Probable 2-(5''-triphosphoribosyl)-3'-dephosphocoenzyme-A synthase (291 aa).

Belongs to the CitG/MdcB family.

The catalysed reaction is 3'-dephospho-CoA + ATP = 2'-(5''-triphospho-alpha-D-ribosyl)-3'-dephospho-CoA + adenine. Involved in the formation of 2-(5''-phosphoribosyl)-3'-dephosphocoenzyme-A, the prosthetic group of the acyl-carrier protein of the malonate decarboxylase. In Pseudomonas syringae pv. tomato (strain ATCC BAA-871 / DC3000), this protein is Probable 2-(5''-triphosphoribosyl)-3'-dephosphocoenzyme-A synthase.